The following is a 231-amino-acid chain: 5'-methylthioadenosine/S-adenosylhomocysteine nucleosidase (231 aa).

Glu12 acts as the Proton acceptor in catalysis. Substrate is bound by residues Gly78, Val153, and 174–175; that span reads ME. Residue Asp198 is the Proton donor of the active site.

The protein belongs to the PNP/UDP phosphorylase family. MtnN subfamily.

It carries out the reaction S-adenosyl-L-homocysteine + H2O = S-(5-deoxy-D-ribos-5-yl)-L-homocysteine + adenine. The catalysed reaction is S-methyl-5'-thioadenosine + H2O = 5-(methylsulfanyl)-D-ribose + adenine. The enzyme catalyses 5'-deoxyadenosine + H2O = 5-deoxy-D-ribose + adenine. Its pathway is amino-acid biosynthesis; L-methionine biosynthesis via salvage pathway; S-methyl-5-thio-alpha-D-ribose 1-phosphate from S-methyl-5'-thioadenosine (hydrolase route): step 1/2. In terms of biological role, catalyzes the irreversible cleavage of the glycosidic bond in both 5'-methylthioadenosine (MTA) and S-adenosylhomocysteine (SAH/AdoHcy) to adenine and the corresponding thioribose, 5'-methylthioribose and S-ribosylhomocysteine, respectively. Also cleaves 5'-deoxyadenosine, a toxic by-product of radical S-adenosylmethionine (SAM) enzymes, into 5-deoxyribose and adenine. In Vibrio atlanticus (strain LGP32) (Vibrio splendidus (strain Mel32)), this protein is 5'-methylthioadenosine/S-adenosylhomocysteine nucleosidase.